The sequence spans 239 residues: Small ribosomal subunit protein eS4 (239 aa).

In terms of domain architecture, S4 RNA-binding spans 37-99 (IPLAVVIRDY…ADLYFRVIPD (63 aa)).

This sequence belongs to the eukaryotic ribosomal protein eS4 family.

In Saccharolobus islandicus (strain Y.N.15.51 / Yellowstone #2) (Sulfolobus islandicus), this protein is Small ribosomal subunit protein eS4.